Here is a 715-residue protein sequence, read N- to C-terminus: Polyribonucleotide nucleotidyltransferase (715 aa).

2 residues coordinate Mg(2+): D493 and D499. The KH domain occupies 560–619 (PRMITVKINPEKIRDVIGKGGSVIRALTEETGTTIDISDDGVVTIASTSSEGMAEAKKRI). One can recognise an S1 motif domain in the interval 629-697 (GQVYEGTVLK…EKGRVRLSAK (69 aa)).

The protein belongs to the polyribonucleotide nucleotidyltransferase family. Requires Mg(2+) as cofactor.

It is found in the cytoplasm. It catalyses the reaction RNA(n+1) + phosphate = RNA(n) + a ribonucleoside 5'-diphosphate. Its function is as follows. Involved in mRNA degradation. Catalyzes the phosphorolysis of single-stranded polyribonucleotides processively in the 3'- to 5'-direction. The sequence is that of Polyribonucleotide nucleotidyltransferase from Burkholderia orbicola (strain MC0-3).